A 301-amino-acid chain; its full sequence is Very-long-chain aldehyde decarbonylase GL1-10 (301 aa).

A run of 3 helical transmembrane segments spans residues 36-56 (VLFW…PLPV), 94-114 (FFLV…MVGI), and 187-207 (SFVG…WIVL). Residues 131–265 (LVYFLVEDYL…FTYCDYLYGT (135 aa)) form the Fatty acid hydroxylase domain.

This sequence belongs to the sterol desaturase family. In terms of assembly, homodimer. Expressed ubiquitously.

The protein resides in the endoplasmic reticulum membrane. It catalyses the reaction a long-chain fatty aldehyde + 2 NADPH + O2 + H(+) = a long-chain alkane + formate + 2 NADP(+) + H2O. Its function is as follows. Aldehyde decarbonylase involved in the conversion of aldehydes to alkanes. Core component of a very-long-chain alkane synthesis complex. In Oryza sativa subsp. japonica (Rice), this protein is Very-long-chain aldehyde decarbonylase GL1-10.